Consider the following 37-residue polypeptide: Conotoxin r11e (37 aa).

4 disulfides stabilise this stretch: Cys-2-Cys-16, Cys-9-Cys-21, Cys-15-Cys-26, and Cys-20-Cys-33. 4-carboxyglutamate is present on residues Glu-13 and Glu-14. A 6'-bromotryptophan modification is found at Trp-34.

Expressed by the venom duct.

Its subcellular location is the secreted. Functionally, causes hyperactivity, circular motion, convulsion, urination and death, when injected into 13- to 15-day-old mice. Causes gasping, backward swimming or swimming in a vertical direction and death, when intraperitoneally injected into goldfish. This Conus radiatus (Rayed cone) protein is Conotoxin r11e.